We begin with the raw amino-acid sequence, 105 residues long: Small ribosomal subunit protein uS10 (105 aa).

This sequence belongs to the universal ribosomal protein uS10 family. As to quaternary structure, part of the 30S ribosomal subunit.

In terms of biological role, involved in the binding of tRNA to the ribosomes. The polypeptide is Small ribosomal subunit protein uS10 (Rickettsia prowazekii (strain Madrid E)).